The primary structure comprises 252 residues: Zinc import ATP-binding protein ZnuC (252 aa).

An ABC transporter domain is found at 5–220 (VTLNKISVTF…PEFIAMFGQR (216 aa)). 37 to 44 (GPNGAGKS) contacts ATP.

This sequence belongs to the ABC transporter superfamily. Zinc importer (TC 3.A.1.15.5) family. The complex is composed of two ATP-binding proteins (ZnuC), two transmembrane proteins (ZnuB) and a solute-binding protein (ZnuA).

The protein localises to the cell inner membrane. The catalysed reaction is Zn(2+)(out) + ATP(in) + H2O(in) = Zn(2+)(in) + ADP(in) + phosphate(in) + H(+)(in). Its function is as follows. Part of the ABC transporter complex ZnuABC involved in zinc import. Responsible for energy coupling to the transport system. The protein is Zinc import ATP-binding protein ZnuC of Yersinia enterocolitica serotype O:8 / biotype 1B (strain NCTC 13174 / 8081).